We begin with the raw amino-acid sequence, 547 residues long: Myrosinase 2 (547 aa).

A signal peptide spans 1 to 28 (MQHNTYIYILTMKLLGFALAILLVVATC). 3 disulfide bridges follow: cysteine 36–cysteine 460, cysteine 44–cysteine 456, and cysteine 236–cysteine 244. A beta-D-glucoside-binding positions include glutamine 69, histidine 171, and 216 to 217 (NQ). N-linked (GlcNAc...) asparagine glycosylation occurs at asparagine 340. Tyrosine 359 is a binding site for a beta-D-glucoside. N-linked (GlcNAc...) asparagine glycosylation is present at asparagine 384. A beta-D-glucoside is bound by residues glutamate 430, tryptophan 479, 486–487 (EF), and phenylalanine 495. Glutamate 430 functions as the Nucleophile in the catalytic mechanism. N-linked (GlcNAc...) asparagine glycosylation occurs at asparagine 504.

Belongs to the glycosyl hydrolase 1 family. In terms of assembly, interacts with MVP1. As to expression, expressed in phloem-associated cells.

It carries out the reaction a thioglucoside + H2O = a sugar + a thiol.. Its function is as follows. May degrade glucosinolates (glucose residue linked by a thioglucoside bound to an amino acid derivative) to glucose, sulfate and any of the products: thiocyanates, isothiocyanates, nitriles, epithionitriles or oxazolidine-2-thiones. These toxic degradation products can deter insect herbivores. Seems to function in abscisic acid (ABA) and methyl jasmonate (MeJA) signaling in guard cells. Functionally redundant with TGG1. The polypeptide is Myrosinase 2 (Arabidopsis thaliana (Mouse-ear cress)).